The chain runs to 185 residues: Ribosome-recycling factor (185 aa).

It belongs to the RRF family.

It is found in the cytoplasm. Functionally, responsible for the release of ribosomes from messenger RNA at the termination of protein biosynthesis. May increase the efficiency of translation by recycling ribosomes from one round of translation to another. The chain is Ribosome-recycling factor from Hahella chejuensis (strain KCTC 2396).